The chain runs to 943 residues: Isoleucine--tRNA ligase (943 aa).

Positions 58 to 68 (PYANGTIHIGH) match the 'HIGH' region motif. An L-isoleucyl-5'-AMP-binding site is contributed by Glu-567. A 'KMSKS' region motif is present at residues 608-612 (KMSKS). Lys-611 is a binding site for ATP. Residues Cys-906, Cys-909, Cys-926, and Cys-929 each coordinate Zn(2+).

It belongs to the class-I aminoacyl-tRNA synthetase family. IleS type 1 subfamily. As to quaternary structure, monomer. Requires Zn(2+) as cofactor.

It is found in the cytoplasm. It carries out the reaction tRNA(Ile) + L-isoleucine + ATP = L-isoleucyl-tRNA(Ile) + AMP + diphosphate. In terms of biological role, catalyzes the attachment of isoleucine to tRNA(Ile). As IleRS can inadvertently accommodate and process structurally similar amino acids such as valine, to avoid such errors it has two additional distinct tRNA(Ile)-dependent editing activities. One activity is designated as 'pretransfer' editing and involves the hydrolysis of activated Val-AMP. The other activity is designated 'posttransfer' editing and involves deacylation of mischarged Val-tRNA(Ile). The polypeptide is Isoleucine--tRNA ligase (Pseudomonas fluorescens (strain SBW25)).